Here is a 299-residue protein sequence, read N- to C-terminus: Tyrosine recombinase XerC (299 aa).

The Core-binding (CB) domain maps to 1 to 85; that stretch reads MERQLEAYCA…AVRGLYRYLN (85 aa). One can recognise a Tyr recombinase domain in the interval 106–285; the sequence is RLPKTLDTDR…DFQHLAAVYD (180 aa). Residues Arg146, Lys170, His237, Arg240, and His263 contribute to the active site. The active-site O-(3'-phospho-DNA)-tyrosine intermediate is the Tyr272.

It belongs to the 'phage' integrase family. XerC subfamily. Forms a cyclic heterotetrameric complex composed of two molecules of XerC and two molecules of XerD.

The protein resides in the cytoplasm. In terms of biological role, site-specific tyrosine recombinase, which acts by catalyzing the cutting and rejoining of the recombining DNA molecules. The XerC-XerD complex is essential to convert dimers of the bacterial chromosome into monomers to permit their segregation at cell division. It also contributes to the segregational stability of plasmids. In Pseudomonas entomophila (strain L48), this protein is Tyrosine recombinase XerC.